Here is a 404-residue protein sequence, read N- to C-terminus: Pyruvate-flavodoxin oxidoreductase (404 aa).

It belongs to the pyruvate:ferredoxin/flavodoxin oxidoreductase family.

It catalyses the reaction oxidized [flavodoxin] + pyruvate + CoA + 2 H(+) = reduced [flavodoxin] + acetyl-CoA + CO2. Oxidoreductase required for the transfer of electrons from pyruvate to flavodoxin, which reduces nitrogenase. The protein is Pyruvate-flavodoxin oxidoreductase (nifJ) of Nostoc sp. (strain ATCC 29151 / PCC 7119) (Anabaena sp.).